The sequence spans 122 residues: Large ribosomal subunit protein uL14 (122 aa).

This sequence belongs to the universal ribosomal protein uL14 family. Part of the 50S ribosomal subunit. Forms a cluster with proteins L3 and L19. In the 70S ribosome, L14 and L19 interact and together make contacts with the 16S rRNA in bridges B5 and B8.

Binds to 23S rRNA. Forms part of two intersubunit bridges in the 70S ribosome. The protein is Large ribosomal subunit protein uL14 of Rickettsia rickettsii (strain Iowa).